An 82-amino-acid chain; its full sequence is Large ribosomal subunit protein bL31 (82 aa).

The protein belongs to the bacterial ribosomal protein bL31 family. Type A subfamily. Part of the 50S ribosomal subunit.

Its function is as follows. Binds the 23S rRNA. The polypeptide is Large ribosomal subunit protein bL31 (Rippkaea orientalis (strain PCC 8801 / RF-1) (Cyanothece sp. (strain PCC 8801))).